Reading from the N-terminus, the 455-residue chain is Oxidative stress induced growth inhibitor homolog osgn-1 (455 aa).

It belongs to the OKL38 family. NADPH serves as cofactor.

It is found in the midbody. Monooxygenase catalytic activity. Involved in regulation of cytokinesis; promotes rho-1/RhoA activity, probably acting locally at the midbody in late cytokinesis. Monooxygenase activity is required to stabilize structures between primordial germ cells (PGCs), termed intercellular bridges. Dispensable for fertility. The protein is Oxidative stress induced growth inhibitor homolog osgn-1 of Caenorhabditis elegans.